The sequence spans 402 residues: NADH-quinone oxidoreductase subunit D (402 aa).

It belongs to the complex I 49 kDa subunit family. In terms of assembly, NDH-1 is composed of 14 different subunits. Subunits NuoB, C, D, E, F, and G constitute the peripheral sector of the complex.

It is found in the cell inner membrane. The catalysed reaction is a quinone + NADH + 5 H(+)(in) = a quinol + NAD(+) + 4 H(+)(out). In terms of biological role, NDH-1 shuttles electrons from NADH, via FMN and iron-sulfur (Fe-S) centers, to quinones in the respiratory chain. The immediate electron acceptor for the enzyme in this species is believed to be ubiquinone. Couples the redox reaction to proton translocation (for every two electrons transferred, four hydrogen ions are translocated across the cytoplasmic membrane), and thus conserves the redox energy in a proton gradient. This Rhodopseudomonas palustris (strain ATCC BAA-98 / CGA009) protein is NADH-quinone oxidoreductase subunit D.